A 301-amino-acid chain; its full sequence is 4-hydroxy-tetrahydrodipicolinate synthase (301 aa).

Residue Thr46 participates in pyruvate binding. The active-site Proton donor/acceptor is the Tyr135. The Schiff-base intermediate with substrate role is filled by Lys163. Ile205 contributes to the pyruvate binding site.

The protein belongs to the DapA family. In terms of assembly, homotetramer; dimer of dimers.

It is found in the cytoplasm. The catalysed reaction is L-aspartate 4-semialdehyde + pyruvate = (2S,4S)-4-hydroxy-2,3,4,5-tetrahydrodipicolinate + H2O + H(+). Its pathway is amino-acid biosynthesis; L-lysine biosynthesis via DAP pathway; (S)-tetrahydrodipicolinate from L-aspartate: step 3/4. In terms of biological role, catalyzes the condensation of (S)-aspartate-beta-semialdehyde [(S)-ASA] and pyruvate to 4-hydroxy-tetrahydrodipicolinate (HTPA). This Lacticaseibacillus casei (strain BL23) (Lactobacillus casei) protein is 4-hydroxy-tetrahydrodipicolinate synthase.